Consider the following 386-residue polypeptide: WD repeat-containing protein 89 (386 aa).

6 WD repeats span residues 21–65 (KEPT…VIRE), 68–106 (GYPG…GKPV), 111–155 (GYPS…QDLS), 167–207 (THSD…EDDA), 213–253 (NSVS…TDEP), and 318–357 (GHAA…KTFT).

The protein is WD repeat-containing protein 89 (WDR89) of Bos taurus (Bovine).